The sequence spans 48 residues: Delta-stichotoxin-She1a (48 aa).

3 disulfide bridges follow: Cys3/Cys43, Cys5/Cys33, and Cys26/Cys44.

It belongs to the sea anemone sodium channel inhibitory toxin family. Type II subfamily.

The protein resides in the secreted. The protein localises to the nematocyst. Binds specifically to voltage-gated sodium channels (Nav), thereby delaying their inactivation during signal transduction. Is highly toxic to crabs (by intrahemocoelic injection), but without effect upon mice (by intraperitoneal injection). This Stichodactyla helianthus (Sun anemone) protein is Delta-stichotoxin-She1a.